The primary structure comprises 94 residues: C-C motif chemokine 26 (94 aa).

Positions 1–23 (MMGLSLASAVLLASLLSLHLGTA) are cleaved as a signal peptide. 2 cysteine pairs are disulfide-bonded: Cys-33/Cys-57 and Cys-34/Cys-73.

The protein belongs to the intercrine beta (chemokine CC) family. In terms of assembly, monomer. As to expression, ubiquitously expressed at low levels in various tissues including heart and ovary.

Its subcellular location is the secreted. Its function is as follows. Chemoattractant for eosinophils and basophils. Acts as a ligand for C-C chemokine receptor CCR3 which triggers Ca(2+) mobilization in eosinophils. Also acts as a ligand for CX3C chemokine receptor CX3CR1, inducing cell chemotaxis. The protein is C-C motif chemokine 26 of Homo sapiens (Human).